A 180-amino-acid polypeptide reads, in one-letter code: Signal peptidase complex subunit 3 (180 aa).

The Cytoplasmic portion of the chain corresponds to 1–12 (MHNLLSRANALL). The chain crosses the membrane as a helical; Signal-anchor for type II membrane protein span at residues 13-33 (AFTLWVMAAVTAACFLSTVFL). The Lumenal portion of the chain corresponds to 34–180 (DYTVPTKLTV…PTTYTTTRRS (147 aa)). Residue Asn141 is glycosylated (N-linked (GlcNAc...) asparagine).

The protein belongs to the SPCS3 family. In terms of assembly, component of the signal peptidase complex (SPC) composed of a catalytic subunit sec-11 and three accessory subunits spcs-1, spcs-2 and spcs-3. The complex induces a local thinning of the ER membrane which is used to measure the length of the signal peptide (SP) h-region of protein substrates. This ensures the selectivity of the complex towards h-regions shorter than 18-20 amino acids.

Its subcellular location is the endoplasmic reticulum membrane. Essential component of the signal peptidase complex (SPC) which catalyzes the cleavage of N-terminal signal sequences from nascent proteins as they are translocated into the lumen of the endoplasmic reticulum. Essential for the SPC catalytic activity, possibly by stabilizing and positioning the active center of the complex close to the lumenal surface. The protein is Signal peptidase complex subunit 3 of Caenorhabditis elegans.